A 425-amino-acid polypeptide reads, in one-letter code: COBRA-like protein 4 (425 aa).

A signal peptide spans 1–27; sequence MAIGVGGCCAVLLAAALLFSSPATTYA. Residues Asn-36, Asn-163, Asn-171, Asn-319, and Asn-352 are each glycosylated (N-linked (GlcNAc...) asparagine).

This sequence belongs to the COBRA family.

The sequence is that of COBRA-like protein 4 (BC1L9) from Oryza sativa subsp. japonica (Rice).